Consider the following 633-residue polypeptide: Probable potassium transport system protein Kup 3 (633 aa).

A run of 11 helical transmembrane segments spans residues 61–81 (LVSL…VLFL), 107–127 (PVLM…DAMI), 143–163 (VAPA…LLLF), 173–193 (VSVF…AAGV), 211–231 (AIGF…AIFL), 255–275 (WFAV…ALVL), 287–307 (LMFP…GTII), 345–365 (IYLP…MLMF), 371–391 (LAPA…ILAF), 402–422 (ALTA…FLGA), and 427–447 (IHHG…MMWT).

Belongs to the HAK/KUP transporter (TC 2.A.72) family.

It is found in the cell inner membrane. It carries out the reaction K(+)(in) + H(+)(in) = K(+)(out) + H(+)(out). In terms of biological role, transport of potassium into the cell. Likely operates as a K(+):H(+) symporter. This is Probable potassium transport system protein Kup 3 from Sinorhizobium medicae (strain WSM419) (Ensifer medicae).